The primary structure comprises 587 residues: Serine/threonine-protein phosphatase 2A 65 kDa regulatory subunit A beta isoform (587 aa).

Ser2 bears the N-acetylserine mark. 14 HEAT repeats span residues 2–42, 44–80, 81–119, 158–196, 197–235, 236–274, 275–313, 315–352, 353–391, 393–430, 432–469, 470–508, 509–547, and 549–586; these read SMID…ALGE, RTRK…YVGG, VEYA…QMRE, DMLK…TVES, AHLK…LLEP, QDCV…AVGP, EPTR…ILNP, IAIQ…VLGK, DATI…VIGI, LLSQ…QLGV, FFDD…EFGP, EWAM…VMGS, EITC…IVDQ, and VVEK…VMMS.

Belongs to the phosphatase 2A regulatory subunit A family. As to quaternary structure, PP2A consists of a common heterodimeric core enzyme, composed of a 36 kDa catalytic subunit (subunit C) and a 65 kDa constant regulatory subunit (subunit A), that associates with a variety of regulatory subunits such as subunits B (the R2/B/PR55/B55, R3/B''/PR72/PR130/PR59 and R5/B'/B56 families). Interacts with B'THETA. Interacts with SRK2E/OST1. Interacts with SIC/RON3. As to expression, ubiquitous, with higher levels in roots and flowers (at protein level).

Its subcellular location is the cytoplasm. The protein localises to the cytosol. It is found in the nucleus. The protein resides in the peroxisome. Functionally, the A subunit of protein phosphatase 2A serves as a scaffolding molecule to coordinate the assembly of the catalytic subunit and a variable regulatory B subunit. Involved during developmental process such as seedling and floral developments. Seems to act as a negative regulator of PP2A catalytic activity. Associates with the serine/threonine-protein phosphatase PP2A catalytic subunit C and regulatory subunit B' to positively regulates beta-oxidation of fatty acids and protoauxins in peroxisomes by dephosphorylating peroxisomal beta-oxidation-related proteins. In Arabidopsis thaliana (Mouse-ear cress), this protein is Serine/threonine-protein phosphatase 2A 65 kDa regulatory subunit A beta isoform (PP2AA2).